We begin with the raw amino-acid sequence, 465 residues long: Methionine aminopeptidase 2-2 (465 aa).

Over residues 1–11 the composition is skewed to basic residues; it reads MGSKTPHNHRR. The disordered stretch occupies residues 1-89; the sequence is MGSKTPHNHR…KKKKNTKELE (89 aa). Over residues 43 to 54 the composition is skewed to acidic residues; the sequence is GESEGGEDEDDD. Residues 73 to 84 show a composition bias toward basic residues; it reads RNKRKKKKKKKN. Position 217 (His217) interacts with substrate. A divalent metal cation contacts are provided by Asp238, Asp249, and His318. Position 326 (His326) interacts with substrate. Positions 351 and 446 each coordinate a divalent metal cation.

This sequence belongs to the peptidase M24A family. Methionine aminopeptidase eukaryotic type 2 subfamily. It depends on Co(2+) as a cofactor. Requires Zn(2+) as cofactor. The cofactor is Mn(2+). Fe(2+) serves as cofactor.

The protein resides in the cytoplasm. The enzyme catalyses Release of N-terminal amino acids, preferentially methionine, from peptides and arylamides.. In terms of biological role, cotranslationally removes the N-terminal methionine from nascent proteins. The N-terminal methionine is often cleaved when the second residue in the primary sequence is small and uncharged (Met-Ala-, Cys, Gly, Pro, Ser, Thr, or Val). In Ajellomyces capsulatus (strain G186AR / H82 / ATCC MYA-2454 / RMSCC 2432) (Darling's disease fungus), this protein is Methionine aminopeptidase 2-2.